The chain runs to 556 residues: Formate--tetrahydrofolate ligase (556 aa).

65–72 (TPAGEGKT) contributes to the ATP binding site.

It belongs to the formate--tetrahydrofolate ligase family.

It catalyses the reaction (6S)-5,6,7,8-tetrahydrofolate + formate + ATP = (6R)-10-formyltetrahydrofolate + ADP + phosphate. Its pathway is one-carbon metabolism; tetrahydrofolate interconversion. In Maricaulis maris (strain MCS10) (Caulobacter maris), this protein is Formate--tetrahydrofolate ligase.